The following is a 205-amino-acid chain: NADH-quinone oxidoreductase subunit C (205 aa).

The protein belongs to the complex I 30 kDa subunit family. NDH-1 is composed of 14 different subunits. Subunits NuoB, C, D, E, F, and G constitute the peripheral sector of the complex.

The protein localises to the cell inner membrane. The enzyme catalyses a quinone + NADH + 5 H(+)(in) = a quinol + NAD(+) + 4 H(+)(out). In terms of biological role, NDH-1 shuttles electrons from NADH, via FMN and iron-sulfur (Fe-S) centers, to quinones in the respiratory chain. The immediate electron acceptor for the enzyme in this species is believed to be ubiquinone. Couples the redox reaction to proton translocation (for every two electrons transferred, four hydrogen ions are translocated across the cytoplasmic membrane), and thus conserves the redox energy in a proton gradient. The chain is NADH-quinone oxidoreductase subunit C from Nitrosospira multiformis (strain ATCC 25196 / NCIMB 11849 / C 71).